Consider the following 186-residue polypeptide: Probable GTP-binding protein EngB (186 aa).

The 169-residue stretch at 18 to 186 (DKVEICFIGR…LKKLLASEFK (169 aa)) folds into the EngB-type G domain. GTP contacts are provided by residues 26–33 (GRSNVGKS), 52–56 (GRTQL), 70–73 (DLPG), 137–140 (TKID), and 166–168 (VSS). The Mg(2+) site is built by Ser-33 and Thr-54.

Belongs to the TRAFAC class TrmE-Era-EngA-EngB-Septin-like GTPase superfamily. EngB GTPase family. It depends on Mg(2+) as a cofactor.

Necessary for normal cell division and for the maintenance of normal septation. This Mycoplasmopsis pulmonis (strain UAB CTIP) (Mycoplasma pulmonis) protein is Probable GTP-binding protein EngB.